The chain runs to 293 residues: MTTFFQQHFSRNKWLAYAQLMRFDKPIGTLLLLHPTLWALFAAAGGMPPLSVLVIFVLGVIVMRAAGCVINDYADRHIDGEVKRTSQRPLATGRVTTTEAKILFVLLLCIAFVLDLLLNRYTFLLSFVAVALAIIYPFMKRFTHLPQVVLGMAFGWAIPMAYGAVSESLPLECWLLFFANIFWTVAYDTQYAMVDRDDDLRIGVKSTAILFAQYDNKIIALLQFITLVLLVIFGWISQYHWGYFVVLGLSASLFSHQCWLTKQRVREQCFKAFLNNHYFGLGVFFAILVGIYA.

Transmembrane regions (helical) follow at residues 41-61 (FAAA…LGVI), 98-118 (TEAK…DLLL), 122-142 (TFLL…MKRF), 145-165 (LPQV…YGAV), 167-187 (ESLP…TVAY), 218-238 (IIAL…WISQ), 241-261 (WGYF…CWLT), and 272-292 (AFLN…VGIY).

The protein belongs to the UbiA prenyltransferase family. Requires Mg(2+) as cofactor.

It localises to the cell inner membrane. The enzyme catalyses all-trans-octaprenyl diphosphate + 4-hydroxybenzoate = 4-hydroxy-3-(all-trans-octaprenyl)benzoate + diphosphate. It participates in cofactor biosynthesis; ubiquinone biosynthesis. Its function is as follows. Catalyzes the prenylation of para-hydroxybenzoate (PHB) with an all-trans polyprenyl group. Mediates the second step in the final reaction sequence of ubiquinone-8 (UQ-8) biosynthesis, which is the condensation of the polyisoprenoid side chain with PHB, generating the first membrane-bound Q intermediate 3-octaprenyl-4-hydroxybenzoate. The chain is 4-hydroxybenzoate octaprenyltransferase from Actinobacillus pleuropneumoniae serotype 5b (strain L20).